Consider the following 86-residue polypeptide: Acyl carrier protein (86 aa).

Positions Glu5–Ile80 constitute a Carrier domain. Position 40 is an O-(pantetheine 4'-phosphoryl)serine (Ser40).

It belongs to the acyl carrier protein (ACP) family. 4'-phosphopantetheine is transferred from CoA to a specific serine of apo-ACP by AcpS. This modification is essential for activity because fatty acids are bound in thioester linkage to the sulfhydryl of the prosthetic group.

The protein resides in the plastid. Its subcellular location is the chloroplast. It functions in the pathway lipid metabolism; fatty acid biosynthesis. Carrier of the growing fatty acid chain in fatty acid biosynthesis. This is Acyl carrier protein from Cyanidium caldarium (Red alga).